The chain runs to 658 residues: MSELLLELFSEEIPAFIQKDAEEGYLSIFTKIFEENEIFAKIQVFSGPRRITLYATHLPKVTLPKEIEIKGPSTEAPEAAINGFCKAHNVSKLELSTKLINNQLYYFYIKKVEERQIKEILPEIIVEAINKYSWAKSMFWGNYNIKWIRPLRNILCIFDSEILPLQFGHLAANNVTFGHRLTDNKKLEVTDFEDYKTKLTENYVILERLKREEIIKTSLLEQANSHNLTIKEDLRLIEEVAGLSEFPVVLCGAIPQKFLELPKEVLISSMRTHQKYFCLFDRSENFAPYFLFVSNGQFANSKLVVQGNEKVLSARLSDALYFYKQDISKTLEANLEKLAAVTFHTKLGSLKEKVERITNICKYIDPDNKDLITAAKLCKSDLVSEMVGEFPELQGIMGYYYAKHENLNEEIAVAIRDHYKPQGLSDSVPVGNAALLAIADKLDSLVGLMIAGEAPTGSGDPYALRRQVLGIIRIIIENKLELNLNSLIDFSLKLYSSDKDKDLIISFFEERAKFYFKNEYDISLINAVLDLNLANIKFKLDALKEFLEKEDGKQLLNAYKRASNILGSQNIDGAVEPSLFNTQPEKELFEVTQKLSLQIVDKDYDKALNLLQTLLTPITSFFDNVLVNDSDPKIAKNRLLILQDVCKLFHKIAKFNRL.

Belongs to the class-II aminoacyl-tRNA synthetase family. As to quaternary structure, tetramer of two alpha and two beta subunits.

It localises to the cytoplasm. The enzyme catalyses tRNA(Gly) + glycine + ATP = glycyl-tRNA(Gly) + AMP + diphosphate. In Rickettsia bellii (strain OSU 85-389), this protein is Glycine--tRNA ligase beta subunit.